A 165-amino-acid chain; its full sequence is GPI-anchored protein LORELEI (165 aa).

The N-terminal stretch at 1 to 20 is a signal peptide; it reads MELILLFFFLMALLVSLSSS. The tract at residues 82-93 is required for its function in pollen tube reception; it reads PYVSQINDMNSD. Residue Asn-137 is glycosylated (N-linked (GlcNAc...) asparagine). A lipid anchor (GPI-anchor amidated serine) is attached at Ser-139. Positions 140–165 are cleaved as a propeptide — removed in mature form; sequence TADSTPRFISLLISAATAVFALLVLT.

As to quaternary structure, interacts with FER. In terms of tissue distribution, expressed in leaves, buds, flowers and stems. Highest expression in the synergid cells of the female gametophyte.

It localises to the cell membrane. Its function is as follows. Female gametophyte-specific component of the signaling pathway required for fertilization. Required for reception of the pollen tube by the female gametophyte. Acts specifically at the synergid cell surface for pollen tube reception. Plays a role in double fertilization and early seed development. Component of the FER-regulated Rho GTPase signaling complex. Acts as a chaperone and coreceptor for FER. Required for localization of FER to the plasma membrane. The polypeptide is GPI-anchored protein LORELEI (LRE) (Arabidopsis thaliana (Mouse-ear cress)).